A 156-amino-acid chain; its full sequence is ATP synthase subunit b (156 aa).

Residues 7–27 (LFVQAIVFLILVWFTMQFVWP) form a helical membrane-spanning segment.

The protein belongs to the ATPase B chain family. F-type ATPases have 2 components, F(1) - the catalytic core - and F(0) - the membrane proton channel. F(1) has five subunits: alpha(3), beta(3), gamma(1), delta(1), epsilon(1). F(0) has three main subunits: a(1), b(2) and c(10-14). The alpha and beta chains form an alternating ring which encloses part of the gamma chain. F(1) is attached to F(0) by a central stalk formed by the gamma and epsilon chains, while a peripheral stalk is formed by the delta and b chains.

It is found in the cell inner membrane. Functionally, f(1)F(0) ATP synthase produces ATP from ADP in the presence of a proton or sodium gradient. F-type ATPases consist of two structural domains, F(1) containing the extramembraneous catalytic core and F(0) containing the membrane proton channel, linked together by a central stalk and a peripheral stalk. During catalysis, ATP synthesis in the catalytic domain of F(1) is coupled via a rotary mechanism of the central stalk subunits to proton translocation. In terms of biological role, component of the F(0) channel, it forms part of the peripheral stalk, linking F(1) to F(0). This Verminephrobacter eiseniae (strain EF01-2) protein is ATP synthase subunit b.